Here is a 140-residue protein sequence, read N- to C-terminus: Ribosomal RNA large subunit methyltransferase H (140 aa).

S-adenosyl-L-methionine-binding residues include Leu-55 and Gly-87.

It belongs to the RNA methyltransferase RlmH family. Homodimer.

Its subcellular location is the cytoplasm. The enzyme catalyses pseudouridine(1915) in 23S rRNA + S-adenosyl-L-methionine = N(3)-methylpseudouridine(1915) in 23S rRNA + S-adenosyl-L-homocysteine + H(+). Specifically methylates the pseudouridine at position 1915 (m3Psi1915) in 23S rRNA. This chain is Ribosomal RNA large subunit methyltransferase H, found in Rhizorhabdus wittichii (strain DSM 6014 / CCUG 31198 / JCM 15750 / NBRC 105917 / EY 4224 / RW1) (Sphingomonas wittichii).